The primary structure comprises 400 residues: Riboflavin biosynthesis protein RibBA (400 aa).

The DHBP synthase stretch occupies residues 1–202 (MTTFGTIEQA…IADLVMYRRR (202 aa)). D-ribulose 5-phosphate is bound by residues 28–29 (RE), aspartate 33, 141–145 (RTGHT), and glutamate 165. Mg(2+) is bound at residue glutamate 29. A Mg(2+)-binding site is contributed by histidine 144. Residues 203–400 (TEKQVELVAE…KRDRMGHLLG (198 aa)) form a GTP cyclohydrolase II region. A GTP-binding site is contributed by 253-257 (RAHSE). Zn(2+) contacts are provided by cysteine 258, cysteine 269, and cysteine 271. Residues glutamine 274, 297–299 (EGR), and threonine 319 contribute to the GTP site. Residue aspartate 331 is the Proton acceptor; for GTP cyclohydrolase activity of the active site. The Nucleophile; for GTP cyclohydrolase activity role is filled by arginine 333. Residues threonine 354 and lysine 359 each coordinate GTP.

In the N-terminal section; belongs to the DHBP synthase family. It in the C-terminal section; belongs to the GTP cyclohydrolase II family. Requires Mg(2+) as cofactor. The cofactor is Mn(2+). It depends on Zn(2+) as a cofactor.

The catalysed reaction is D-ribulose 5-phosphate = (2S)-2-hydroxy-3-oxobutyl phosphate + formate + H(+). It carries out the reaction GTP + 4 H2O = 2,5-diamino-6-hydroxy-4-(5-phosphoribosylamino)-pyrimidine + formate + 2 phosphate + 3 H(+). Its pathway is cofactor biosynthesis; riboflavin biosynthesis; 2-hydroxy-3-oxobutyl phosphate from D-ribulose 5-phosphate: step 1/1. The protein operates within cofactor biosynthesis; riboflavin biosynthesis; 5-amino-6-(D-ribitylamino)uracil from GTP: step 1/4. Functionally, catalyzes the conversion of D-ribulose 5-phosphate to formate and 3,4-dihydroxy-2-butanone 4-phosphate. In terms of biological role, catalyzes the conversion of GTP to 2,5-diamino-6-ribosylamino-4(3H)-pyrimidinone 5'-phosphate (DARP), formate and pyrophosphate. The protein is Riboflavin biosynthesis protein RibBA of Salinispora tropica (strain ATCC BAA-916 / DSM 44818 / JCM 13857 / NBRC 105044 / CNB-440).